The following is a 492-amino-acid chain: Tyrosine--tRNA ligase, mitochondrial (492 aa).

Residue Tyr89 participates in L-tyrosine binding. Asp93 is an ATP binding site. The short motif at 94–103 (PTAQSLHLGN) is the 'HIGH' region element. Positions 133, 239, 243, 246, and 265 each coordinate L-tyrosine. The short motif at 303–307 (KFGKS) is the 'KMSKS' region element. Lys306 is an ATP binding site.

The protein belongs to the class-I aminoacyl-tRNA synthetase family. In terms of assembly, homodimer.

Its subcellular location is the mitochondrion matrix. The catalysed reaction is tRNA(Tyr) + L-tyrosine + ATP = L-tyrosyl-tRNA(Tyr) + AMP + diphosphate + H(+). Functionally, catalyzes the attachment of tyrosine to tRNA(Tyr) in a two-step reaction: tyrosine is first activated by ATP to form Tyr-AMP and then transferred to the acceptor end of tRNA(Tyr). The protein is Tyrosine--tRNA ligase, mitochondrial (MSY1) of Saccharomyces cerevisiae (strain ATCC 204508 / S288c) (Baker's yeast).